The primary structure comprises 3948 residues: Hybrid PKS-NRPS synthetase fsa1 (3948 aa).

The 435-residue stretch at 4–438 (SEPIAVIGSA…GTNAHAIIEA (435 aa)) folds into the Ketosynthase family 3 (KS3) domain. Catalysis depends on for beta-ketoacyl synthase activity residues Cys-177, His-316, and His-358. Positions 543-846 (IFTGQGTQWP…LDTIEAISEG (304 aa)) are malonyl-CoA:ACP transacylase (MAT) domain. The interval 931 to 1066 (HPLLGRRCHD…AQIKASLGTP (136 aa)) is N-terminal hotdog fold. The interval 931-1233 (HPLLGRRCHD…MELVPFSPAT (303 aa)) is dehydratase (DH) domain. Residues 931–1235 (HPLLGRRCHD…LVPFSPATPA (305 aa)) enclose the PKS/mFAS DH domain. His-964 acts as the Proton acceptor; for dehydratase activity in catalysis. The interval 1081-1235 (LRPVSVDRFY…LVPFSPATPA (155 aa)) is C-terminal hotdog fold. Asp-1141 serves as the catalytic Proton donor; for dehydratase activity. Positions 1381-1578 (YEQGFGLNLV…TTPPVHKILP (198 aa)) are methyltransferase (MT) domain. The tract at residues 2105–2277 (TFLLIGLTGE…VAASSIDISS (173 aa)) is ketoreductase (KR) domain. The 76-residue stretch at 2389-2464 (AIIKESFIVR…DLVDESLDLL (76 aa)) folds into the Carrier 1 domain. Ser-2424 carries the post-translational modification O-(pantetheine 4'-phosphoryl)serine. A disordered region spans residues 2475 to 2555 (EAGNAHPAKP…TDNLTPPRTF (81 aa)). 2 stretches are compositionally biased toward polar residues: residues 2487–2505 (VIPQ…QGTS) and 2513–2528 (GSDS…LTSW). The span at 2529–2541 (DRQDLSPPDKSDD) shows a compositional bias: basic and acidic residues. Over residues 2542–2551 (APNSTDNLTP) the composition is skewed to polar residues. Residues 2547 to 2976 (DNLTPPRTFP…TQVLLRSYLS (430 aa)) are condensation (C) domain. Residues 3000 to 3402 (LKVAVDAGKA…PDTFFGTSGT (403 aa)) are adenylation (A) (KR) domain. The Carrier 2 domain maps to 3540–3617 (KSLTASEKRL…AMASVLEDCG (78 aa)). O-(pantetheine 4'-phosphoryl)serine is present on Ser-3577. The reductase (RED) domain stretch occupies residues 3653 to 3870 (LTGSSGYLGR…MPVNEIVEAI (218 aa)).

This sequence in the C-terminal section; belongs to the NRP synthetase family.

The enzyme catalyses L-serine + 7 malonyl-CoA + acetyl-CoA + 2 S-adenosyl-L-methionine + ATP + 8 NADPH + 11 H(+) = (5S)-3-[(2E,6R,8E,10E,12E)-2,6-dimethyltetradeca-2,8,10,12-tetraenoyl]-5-(hydroxymethyl)pyrrolidine-2,4-dione + AMP + 2 S-adenosyl-L-homocysteine + 7 CO2 + diphosphate + 8 NADP(+) + 8 CoA + 6 H2O. It participates in mycotoxin biosynthesis. Functionally, hybrid PKS-NRPS synthetase; part of the gene cluster that mediates the biosynthesis of HIV-1 integrase inhibitor equisetin and of fusarisetin A, both trans-fused decalin-containing tetramic acids showing also antimicrobial activity. The PKS module of fsa1 together with the enoylreductase fsa3 catalyze the formation of the polyketide unit which is then conjugated to L-serine by the condensation domain of the fsa1 NRPS module. Activity of the Dieckmann cyclase domain (RED) results in release of the Dieckmann product intermediate. Diels-Alderase fsa2 is involved in endo-selective Diels-Alder cycloaddition to form the decalin ring, leading to the production of N-desmethylequisetin also called trichosetin. Subsequent N-methylation is carried out by fsa4 to give equisetin. The enzymatic gene responsible for the conversion of equisetin to fusarisetin A has not been identified yet and is probably located outside of the fsa cluster. This chain is Hybrid PKS-NRPS synthetase fsa1, found in Fusarium sp. (strain FN080326).